A 190-amino-acid chain; its full sequence is Abscisic acid receptor PYL2 (190 aa).

Residues 28–182 (FEPDPTTCTS…NLQKLGVAAT (155 aa)) are START-like. Abscisate is bound by residues K64, 93 to 98 (ASTSTE), 120 to 126 (RLKNYKS), and E147. A Gate loop motif is present at residues 89–93 (SGLPA). A Latch loop motif is present at residues 119-121 (HRL).

The protein belongs to the PYR/PYL/RCAR abscisic acid intracellular receptor family. Homodimer. Binds ABA on one subunit only. Interacts with HAB1, ABI1 and ABI2, and possibly with other PP2Cs. Binds to CARs protein in an ABA-independent manner, both at the plasma membrane and in the nucleus.

The protein resides in the cytoplasm. It is found in the nucleus. It localises to the cell membrane. In terms of biological role, receptor for abscisic acid (ABA) required for ABA-mediated responses such as stomatal closure and germination inhibition. Inhibits the activity of group-A protein phosphatases type 2C (PP2Cs) when activated by ABA. Can be activated by both (-)-ABA and (+)-ABA. The protein is Abscisic acid receptor PYL2 (PYL2) of Arabidopsis thaliana (Mouse-ear cress).